Here is a 619-residue protein sequence, read N- to C-terminus: Tyrosine-protein kinase ZAP-70 (619 aa).

The region spanning 10–102 (FFYGSISRAE…GLPCNLRKPC (93 aa)) is the SH2 1 domain. The interval 103–162 (NRPSGLEPQPGVFDCLRDAMVRDYVRQTWKLEGEALEQAIISQAPQVEKLIATTAHERMP) is interdomain A. Residues 163–254 (WYHSSLTREE…GLIYCLKEAC (92 aa)) form the SH2 2 domain. Phosphotyrosine is present on Y248. Residues 255–337 (PNSSASNASG…KKLFLKRDNL (83 aa)) are interdomain B. The tract at residues 260–309 (SNASGAAAPTLPAHPSTLTHPQRRIDTLNSDGYTPEPARITSPDKPRPMP) is disordered. S289 is subject to Phosphoserine. At Y292 the chain carries Phosphotyrosine. Residue Y315 is modified to Phosphotyrosine; by LCK. At Y319 the chain carries Phosphotyrosine. Residues 338–600 (LIADIELGCG…QRMRACYYSL (263 aa)) enclose the Protein kinase domain. Residues 345–352 (GCGNFGSV) and K369 each bind ATP. D461 (proton acceptor) is an active-site residue. Y492 and Y493 each carry phosphotyrosine. Residue K544 forms a Glycyl lysine isopeptide (Lys-Gly) (interchain with G-Cter in ubiquitin) linkage. N6-acetyllysine is present on K603.

This sequence belongs to the protein kinase superfamily. Tyr protein kinase family. SYK/ZAP-70 subfamily. As to quaternary structure, interacts with CD247/CD3Z; this interaction docks ZAP70 at the stimulated TCR. Interacts with NFAM1. Interacts with adapter protein SLA; this interaction negatively regulates T-cell receptor signaling. Interacts with FCRL3. Interacts with VAV1. Interacts with CBL; this interaction promotes ubiquitination, internalization and subsequent degradation of CD247/CD3Z. Identified in a complex with CBL and UBE2L3. Interacts with SHB. Interacts with adapter protein SLA2; this interaction negatively regulates T-cell receptor signaling. Interacts with CBLB. Interacts (via SH2 domains) with RHOH; this interaction regulates ZAP70 subcellular localization. Interacts with DEF6. Interacts (ubiquitinated form) with OTUD7B and UBASH3B. In terms of processing, phosphorylated on tyrosine residues upon T-cell antigen receptor (TCR) stimulation. Phosphorylation of Tyr-315 and Tyr-319 are essential for ZAP70 positive function on T-lymphocyte activation whereas Tyr-292 has a negative regulatory role. Within the C-terminal kinase domain, Tyr-492 and Tyr-493 are phosphorylated after TCR induction, Tyr-492 playing a negative regulatory role and Tyr-493 a positive. Tyr-493 is dephosphorylated by PTN22. Post-translationally, ubiquitinated in response to T cell activation. Deubiquitinated by OTUD7B. In terms of tissue distribution, expressed in T- and natural killer cells. Also present in early thymocytes and pro/pre B-cells.

The protein localises to the cytoplasm. The protein resides in the cell membrane. The catalysed reaction is L-tyrosyl-[protein] + ATP = O-phospho-L-tyrosyl-[protein] + ADP + H(+). Activated by phosphorylation at Tyr-493 in the activation loop. Inhibited by staurosporine. Tyrosine kinase that plays an essential role in regulation of the adaptive immune response. Regulates motility, adhesion and cytokine expression of mature T-cells, as well as thymocyte development. Also contributes to the development and activation of primary B-lymphocytes. When antigen presenting cells (APC) activate T-cell receptor (TCR), a serie of phosphorylations lead to the recruitment of ZAP70 to the doubly phosphorylated TCR component CD247/CD3Z through ITAM motif at the plasma membrane. This recruitment serves to localization to the stimulated TCR and to relieve its autoinhibited conformation. Release of ZAP70 active conformation is further stabilized by phosphorylation mediated by LCK. Subsequently, ZAP70 phosphorylates at least 2 essential adapter proteins: LAT and LCP2. In turn, a large number of signaling molecules are recruited and ultimately lead to lymphokine production, T-cell proliferation and differentiation. Furthermore, ZAP70 controls cytoskeleton modifications, adhesion and mobility of T-lymphocytes, thus ensuring correct delivery of effectors to the APC. ZAP70 is also required for TCR-CD247/CD3Z internalization and degradation through interaction with the E3 ubiquitin-protein ligase CBL and adapter proteins SLA and SLA2. Thus, ZAP70 regulates both T-cell activation switch on and switch off by modulating TCR expression at the T-cell surface. During thymocyte development, ZAP70 promotes survival and cell-cycle progression of developing thymocytes before positive selection (when cells are still CD4/CD8 double negative). Additionally, ZAP70-dependent signaling pathway may also contribute to primary B-cells formation and activation through B-cell receptor (BCR). The polypeptide is Tyrosine-protein kinase ZAP-70 (ZAP70) (Homo sapiens (Human)).